The following is a 1490-amino-acid chain: Leucine-rich repeat-containing protein 7 (1490 aa).

LRR repeat units lie at residues 23-44 (IISVLDYSHCSLQQVPKEVFNF), 47-68 (TLEELYLDANQIEELPKQLFNC), 70-91 (ALRKLSIPDNDLSSLPTSIASL), 93-114 (NLKELDISKNGVQEFPENIKCC), 116-137 (CLTIIEASVNPISKLPDGFTQL), 139-161 (NLTQLYLNDAFLEFLPANFGRLV), 162-183 (KLRILELRENHLKTLPKSMHKL), 185-206 (QLERLDLGNNEFSELPEVLDQI), 208-229 (NLRELWMDNNALQVLPGSIGKL), 231-253 (MLVYLDMSKNRIETVDMDISGCE), 254-275 (ALEDLLLSSNMLQQLPDSIGLL), 277-298 (KLTTLKVDDNQLTMLPNTIGNL), 300-321 (LLEEFDCSCNELESLPPTIGYL), 323-344 (SLRTLAVDENFLPELPREIGSC), 346-367 (NVTVMSLRSNKLEFLPEEIGQM), 369-391 (RLRVLNLSDNRLKNLPFSFTKLK), and 392-413 (ELAALWLSDNQSKALIPLQTEA). A phosphoserine mark is found at Ser-439, Ser-441, and Ser-443. The segment covering 663-676 (KKESTDESEVDKTH) has biased composition (basic and acidic residues). Disordered regions lie at residues 663 to 709 (KKES…VGSL), 775 to 808 (DNTGFVSEEATGENANNNPLLSSKARSVPAHGRR), and 822 to 899 (ELEQ…YHDP). Polar residues predominate over residues 677–686 (CLNNSVSSGT). Positions 687 to 700 (YSDYSPSQASSASS) are enriched in low complexity. Polar residues predominate over residues 787–799 (ENANNNPLLSSKA). At Thr-831 the chain carries Phosphothreonine. Phosphoserine is present on Ser-850. The span at 859–871 (PSKLETTPTTSPL) shows a compositional bias: low complexity. Thr-865 is subject to Phosphothreonine. At Ser-869 the chain carries Phosphoserine. Positions 872–882 (PERKDHMKEPT) are enriched in basic and acidic residues. 3 positions are modified to phosphoserine: Ser-947, Ser-949, and Ser-1118. Arg-1149 bears the Omega-N-methylarginine mark. Positions 1194-1217 (LTQRRPLSARSYSTESYGASQTRP) are enriched in polar residues. The disordered stretch occupies residues 1194–1218 (LTQRRPLSARSYSTESYGASQTRPV). Ser-1233 bears the Phosphoserine mark. 2 disordered regions span residues 1238–1265 (GNYGDKTSDNSDIKTRPTPVKGEESCGK) and 1282–1312 (RLDRTPSQQSNILDNGQEDVSPSGQWNPYPL). Residues 1243–1263 (KTSDNSDIKTRPTPVKGEESC) are compositionally biased toward basic and acidic residues. Over residues 1286-1307 (TPSQQSNILDNGQEDVSPSGQW) the composition is skewed to polar residues. Residues Ser-1288 and Ser-1392 each carry the phosphoserine modification. The 91-residue stretch at 1398–1488 (EQFCVRIEKN…TVDLVIQREL (91 aa)) folds into the PDZ domain.

Belongs to the LAP (LRR and PDZ) protein family. Interacts with CNKSR2 and DLG4. Interacts with CTNND2/Catenin delta-2. Forms a complex with N-cadherin through CTNND2. Interacts with CAMK2A. In terms of processing, O-glycosylated and phosphorylated. Brain-specific. Highly concentrated at synapses.

It localises to the cytoplasm. The protein localises to the postsynaptic density. Required for normal synaptic spine architecture and function. Necessary for DISC1 and GRM5 localization to postsynaptic density complexes and for both N-methyl D-aspartate receptor-dependent and metabotropic glutamate receptor-dependent long term depression. The polypeptide is Leucine-rich repeat-containing protein 7 (Lrrc7) (Rattus norvegicus (Rat)).